We begin with the raw amino-acid sequence, 71 residues long: Translation initiation factor IF-1 (71 aa).

An S1-like domain is found at 1–71; sequence MAKQAAIEQD…LTKARITYRY (71 aa).

Belongs to the IF-1 family. In terms of assembly, component of the 30S ribosomal translation pre-initiation complex which assembles on the 30S ribosome in the order IF-2 and IF-3, IF-1 and N-formylmethionyl-tRNA(fMet); mRNA recruitment can occur at any time during PIC assembly.

It is found in the cytoplasm. Its function is as follows. One of the essential components for the initiation of protein synthesis. Stabilizes the binding of IF-2 and IF-3 on the 30S subunit to which N-formylmethionyl-tRNA(fMet) subsequently binds. Helps modulate mRNA selection, yielding the 30S pre-initiation complex (PIC). Upon addition of the 50S ribosomal subunit IF-1, IF-2 and IF-3 are released leaving the mature 70S translation initiation complex. In Christiangramia forsetii (strain DSM 17595 / CGMCC 1.15422 / KT0803) (Gramella forsetii), this protein is Translation initiation factor IF-1.